The sequence spans 89 residues: MAKESMKAREVKRENTVAKYAEKRKALKEAGDFVGLQKLPKNASPVRMHNRCKLTGRPRGYMRQFGISRVTFREMANNGLIPGVKKASW.

The protein belongs to the universal ribosomal protein uS14 family. Part of the 30S ribosomal subunit. Contacts proteins S3 and S10.

Functionally, binds 16S rRNA, required for the assembly of 30S particles and may also be responsible for determining the conformation of the 16S rRNA at the A site. This is Small ribosomal subunit protein uS14 from Flavobacterium psychrophilum (strain ATCC 49511 / DSM 21280 / CIP 103535 / JIP02/86).